The sequence spans 345 residues: NADH-quinone oxidoreductase subunit H (345 aa).

8 helical membrane-spanning segments follow: residues valine 13–leucine 33, phenylalanine 84–phenylalanine 104, valine 115–glycine 135, isoleucine 161–valine 181, phenylalanine 190–leucine 210, tyrosine 248–serine 268, isoleucine 278–valine 298, and leucine 309–alanine 329.

This sequence belongs to the complex I subunit 1 family. NDH-1 is composed of 14 different subunits. Subunits NuoA, H, J, K, L, M, N constitute the membrane sector of the complex.

The protein resides in the cell inner membrane. The catalysed reaction is a quinone + NADH + 5 H(+)(in) = a quinol + NAD(+) + 4 H(+)(out). Functionally, NDH-1 shuttles electrons from NADH, via FMN and iron-sulfur (Fe-S) centers, to quinones in the respiratory chain. The immediate electron acceptor for the enzyme in this species is believed to be ubiquinone. Couples the redox reaction to proton translocation (for every two electrons transferred, four hydrogen ions are translocated across the cytoplasmic membrane), and thus conserves the redox energy in a proton gradient. This subunit may bind ubiquinone. The polypeptide is NADH-quinone oxidoreductase subunit H (Dinoroseobacter shibae (strain DSM 16493 / NCIMB 14021 / DFL 12)).